Reading from the N-terminus, the 287-residue chain is Phosphatidylserine decarboxylase proenzyme (287 aa).

Residues aspartate 90, histidine 147, and serine 252 each act as charge relay system; for autoendoproteolytic cleavage activity in the active site. Serine 252 (schiff-base intermediate with substrate; via pyruvic acid; for decarboxylase activity) is an active-site residue. At serine 252 the chain carries Pyruvic acid (Ser); by autocatalysis.

The protein belongs to the phosphatidylserine decarboxylase family. PSD-B subfamily. Prokaryotic type I sub-subfamily. As to quaternary structure, heterodimer of a large membrane-associated beta subunit and a small pyruvoyl-containing alpha subunit. It depends on pyruvate as a cofactor. In terms of processing, is synthesized initially as an inactive proenzyme. Formation of the active enzyme involves a self-maturation process in which the active site pyruvoyl group is generated from an internal serine residue via an autocatalytic post-translational modification. Two non-identical subunits are generated from the proenzyme in this reaction, and the pyruvate is formed at the N-terminus of the alpha chain, which is derived from the carboxyl end of the proenzyme. The autoendoproteolytic cleavage occurs by a canonical serine protease mechanism, in which the side chain hydroxyl group of the serine supplies its oxygen atom to form the C-terminus of the beta chain, while the remainder of the serine residue undergoes an oxidative deamination to produce ammonia and the pyruvoyl prosthetic group on the alpha chain. During this reaction, the Ser that is part of the protease active site of the proenzyme becomes the pyruvoyl prosthetic group, which constitutes an essential element of the active site of the mature decarboxylase.

The protein resides in the cell membrane. It carries out the reaction a 1,2-diacyl-sn-glycero-3-phospho-L-serine + H(+) = a 1,2-diacyl-sn-glycero-3-phosphoethanolamine + CO2. The protein operates within phospholipid metabolism; phosphatidylethanolamine biosynthesis; phosphatidylethanolamine from CDP-diacylglycerol: step 2/2. Catalyzes the formation of phosphatidylethanolamine (PtdEtn) from phosphatidylserine (PtdSer). The protein is Phosphatidylserine decarboxylase proenzyme of Pseudomonas putida (strain W619).